The primary structure comprises 345 residues: Uroporphyrinogen decarboxylase (345 aa).

Residues 23–27 (RQAGR), D73, Y149, T203, and H319 contribute to the substrate site.

Belongs to the uroporphyrinogen decarboxylase family. As to quaternary structure, homodimer.

The protein resides in the cytoplasm. It carries out the reaction uroporphyrinogen III + 4 H(+) = coproporphyrinogen III + 4 CO2. It functions in the pathway porphyrin-containing compound metabolism; protoporphyrin-IX biosynthesis; coproporphyrinogen-III from 5-aminolevulinate: step 4/4. Catalyzes the decarboxylation of four acetate groups of uroporphyrinogen-III to yield coproporphyrinogen-III. The chain is Uroporphyrinogen decarboxylase from Vesicomyosocius okutanii subsp. Calyptogena okutanii (strain HA).